A 553-amino-acid polypeptide reads, in one-letter code: HTH-type transcriptional regulator SgrR (553 aa).

Positions 1-117 (MPSSRLQQQF…LSQIERRFRQ (117 aa)) constitute an HTH marR-type domain. The H-T-H motif DNA-binding region spans 26 to 49 (LQELANVLHCSKRHIRSLLNNMQK). Positions 163-494 (EPEADLAHHW…NDLSKEVSQW (332 aa)) are solute-binding.

Activates the small RNA gene sgrS under glucose-phosphate stress conditions as well as yfdZ. Represses its own transcription under both stress and non-stress conditions. Might act as a sensor of the intracellular accumulation of phosphoglucose by binding these molecules in its C-terminal solute-binding domain. The polypeptide is HTH-type transcriptional regulator SgrR (Photorhabdus laumondii subsp. laumondii (strain DSM 15139 / CIP 105565 / TT01) (Photorhabdus luminescens subsp. laumondii)).